The following is a 387-amino-acid chain: Krueppel-like factor 17 (387 aa).

3 disordered regions span residues Phe28 to Val54, Ser213 to Ser234, and Arg257 to Ser277. Polar residues predominate over residues Asp30 to Arg46. Positions Arg257–Ser270 are enriched in basic and acidic residues. 3 C2H2-type zinc fingers span residues Tyr280–His304, Tyr310–His334, and His340–His362. Residues Gln357–Leu387 form a disordered region.

This sequence belongs to the Sp1 C2H2-type zinc-finger protein family.

It is found in the nucleus. In terms of biological role, transcription repressor that binds to the promoter of target genes and prevents their expression. Acts as a negative regulator of epithelial-mesenchymal transition and metastasis in breast cancer. Specifically binds the 5'-CACCC-3' sequence in the promoter of ID1, a key metastasis regulator in breast cancer, and repress its expression. May be a germ cell-specific transcription factor that plays important roles in spermatid differentiation and oocyte development. The chain is Krueppel-like factor 17 (KLF17) from Sus scrofa (Pig).